The following is a 529-amino-acid chain: Peptide chain release factor 3 (529 aa).

The 270-residue stretch at 11–280 folds into the tr-type G domain; it reads AKRRTFAIIS…GLVEWAPAPM (270 aa). GTP contacts are provided by residues 20 to 27, 88 to 92, and 142 to 145; these read SHPDAGKT, DTPGH, and NKLD.

It belongs to the TRAFAC class translation factor GTPase superfamily. Classic translation factor GTPase family. PrfC subfamily.

It is found in the cytoplasm. In terms of biological role, increases the formation of ribosomal termination complexes and stimulates activities of RF-1 and RF-2. It binds guanine nucleotides and has strong preference for UGA stop codons. It may interact directly with the ribosome. The stimulation of RF-1 and RF-2 is significantly reduced by GTP and GDP, but not by GMP. This Citrobacter koseri (strain ATCC BAA-895 / CDC 4225-83 / SGSC4696) protein is Peptide chain release factor 3.